We begin with the raw amino-acid sequence, 356 residues long: Formate-nitrite transporter (356 aa).

At 1–108 (MPREKPRADE…TKATYPIMKM (108 aa)) the chain is on the cytoplasmic side. The chain crosses the membrane as a helical span at residues 109 to 129 (FSLSVLAGMLLSVGGLLSITI). The Extracellular portion of the chain corresponds to 130–142 (GKGIPSSDIGIQK). A helical transmembrane segment spans residues 143-163 (IVFGFFNSVGLNLVVLCGGEL). Residues 164-182 (FTSNCAFLIPGFMEGAYSR) are Cytoplasmic-facing. A helical transmembrane segment spans residues 183–203 (WLFFKTHFVVYFGNLVGSIFV). The Extracellular segment spans residues 204–237 (STYFGKLLGSFESPMYLSAVKQIGETKVAMNWGR). A helical membrane pass occupies residues 238–258 (ALLSGIGCNWLVCCAVYFSAS). At 259–265 (AKDLLSK) the chain is on the cytoplasmic side. Residues 266–286 (LVVISFLVLTFASLEFENCVG) form a helical membrane-spanning segment. Residues 287–310 (NMFLLSLSHMYGGNFTLGQWILNN) lie on the Extracellular side of the membrane. Residues 311 to 331 (LIPVSIGNFIGGTFLLGIPLW) traverse the membrane as a helical segment. The Cytoplasmic portion of the chain corresponds to 332–356 (YVHVSNVYNIPFLDPLYQQSQAKTQ).

Belongs to the FNT transporter (TC 1.A.16) family. Homopentamer.

The protein resides in the membrane. It catalyses the reaction (S)-lactate(in) + H(+)(in) = (S)-lactate(out) + H(+)(out). The catalysed reaction is formate(in) + H(+)(in) = formate(out) + H(+)(out). The enzyme catalyses pyruvate(out) + H(+)(out) = pyruvate(in) + H(+)(in). It carries out the reaction acetate(out) + H(+)(out) = acetate(in) + H(+)(in). In terms of biological role, monocarboxylate-proton symporter; active in acidic-to-neutral pH range. Transports formate, acetate and L-lactate. The protein is Formate-nitrite transporter of Entamoeba histolytica (strain ATCC 30459 / HM-1:IMSS / ABRM).